A 276-amino-acid polypeptide reads, in one-letter code: Monoglyceride lipase homolog (276 aa).

The protein belongs to the orthopoxvirus OPG043 family.

The sequence is that of Monoglyceride lipase homolog (OPG043) from Cynomys gunnisoni (Gunnison's prairie dog).